The following is a 372-amino-acid chain: Cyclin-dependent kinase 9 (372 aa).

One can recognise a Protein kinase domain in the interval 19–315 (YEKLAKIGQG…SDDALNHDFF (297 aa)). An ATP-binding site is contributed by 25-33 (IGQGTFGEV). The residue at position 35 (K35) is a Phosphoserine. K44 carries the post-translational modification N6-acetyllysine; by EP300/CBP, PCAF/KAT2B and GCN5/KAT2A. K48 is an ATP binding site. K48 is modified (N6-acetyllysine; by PCAF/KAT2B and GCN5/KAT2A). Position 54 is a phosphothreonine (N54). 104-106 (DFC) contacts ATP. D149 functions as the Proton acceptor in the catalytic mechanism. The interval 166–191 (ADFGLARAFSLAKNSQPNRYTNRVVT) is T-loop. D167 contributes to the ATP binding site. Phosphoserine is present on S175. The residue at position 186 (T186) is a Phosphothreonine; by CaMK1D. Residues 343–372 (RRKGSQITQQSTNQSRNPATTNQTEFERVF) are disordered. Residue S347 is modified to Phosphoserine; by CDK9 and PKA. Residues 347–366 (SQITQQSTNQSRNPATTNQT) show a composition bias toward polar residues. T350 carries the post-translational modification Phosphothreonine; by CDK9. S353 carries the post-translational modification Phosphoserine; by CDK9. Residue T354 is modified to Phosphothreonine; by CDK9. S357 bears the Phosphoserine; by CDK9 mark. 2 positions are modified to phosphothreonine; by CDK9: T362 and T363.

This sequence belongs to the protein kinase superfamily. CMGC Ser/Thr protein kinase family. CDC2/CDKX subfamily. As to quaternary structure, component of the super elongation complex (SEC), at least composed of EAF1, EAF2, CDK9, MLLT3/AF9, AFF (AFF1 or AFF4), the P-TEFb complex and ELL (ELL, ELL2 or ELL3). Associates with CCNT1/cyclin-T1, CCNT2/cyclin-T2 (isoform A and isoform B) or CCNK/cyclin-K to form active P-TEFb. P-TEFb forms a complex with AFF4/AF5Q31 and is part of the super elongation complex (SEC). Component of a complex which is composed of at least 5 members: HTATSF1/Tat-SF1, P-TEFb complex, RNA pol II, SUPT5H and NCL/nucleolin. Associates with UBR5 and forms a transcription regulatory complex composed of CDK9, RNAP II, UBR5 and TFIIS/TCEA1 that can stimulate target gene transcription (e.g. gamma fibrinogen/FGG) by recruiting their promoters. Component of the 7SK snRNP inactive complex which is composed of at least 8 members: P-TEFb (composed of CDK9 and CCNT1/cyclin-T1), HEXIM1, HEXIM2, LARP7, BCDIN3, SART3 proteins and 7SK and U6 snRNAs. This inactive 7SK snRNP complex can also interact with NCOR1 and HDAC3, probably to regulate CDK9 acetylation. Release of P-TEFb from P-TEFb/7SK snRNP complex requires both PP2B to transduce calcium Ca(2+) signaling in response to stimuli (e.g. UV or hexamethylene bisacetamide (HMBA)) and PPP1CA to dephosphorylate Thr-186. This released P-TEFb remains inactive in the pre-initiation complex with BRD4 until new Thr-186 phosphorylation occurs after the synthesis of a short RNA. Interacts with BRD4; to target chromatin binding. Interacts with JMJD6. Interacts with activated nuclear STAT3 and RELA/p65. Binds to AR and MYOD1. Forms a complex composed of CDK9, CCNT1/cyclin-T1, EP300 and GATA4 that stimulates hypertrophy in cardiomyocytes. The large PER complex involved in the repression of transcriptional termination is composed of at least PER2, CDK9, DDX5, DHX9, NCBP1 and POLR2A. Interacts with HSF1. Interacts with TBX21. Isoform 3: binds to KU70/XRCC6. Interacts with WDR43. Interacts with ZMYND8; the association appears to occur between homodimeric ZMYND8 and the activated form of the P-TEFb complex. (Microbial infection) Interacts with the acidic/proline-rich region of HIV-1 and HIV-2 Tat via T-loop region and is thus required for HIV to hijack host transcription machinery during its replication through cooperative binding to viral TAR RNA. In terms of assembly, (Microbial infection) Interacts with human herpes virus 1 (HHV-1) protein ICP22; this interaction blocks the recruitment of positive transcription elongation factor b (P-TEFb) to the viral promoter. Post-translationally, autophosphorylation at Thr-186, Ser-347, Thr-350, Ser-353, Thr-354 and Ser-357 triggers kinase activity by promoting cyclin and substrate binding (e.g. HIV TAT) upon conformational changes. Thr-186 phosphorylation requires the calcium Ca(2+) signaling pathway, including CaMK1D and calmodulin. This inhibition is relieved by Thr-29 dephosphorylation. However, phosphorylation at Thr-29 is inhibitory within the HIV transcription initiation complex. Phosphorylation at Ser-175 inhibits kinase activity. Can be phosphorylated on either Thr-362 or Thr-363 but not on both simultaneously. In terms of processing, dephosphorylation of Thr-186 by PPM1A and PPM1B blocks CDK9 activity and may lead to CDK9 proteasomal degradation. However, PPP1CA-mediated Thr-186 dephosphorylation is required to release P-TEFb from its inactive P-TEFb/7SK snRNP complex. Dephosphorylated at Ser-347 by the PNUTS-PP1 complex during RNA polymerase II transcription pause-release. Dephosphorylation of C-terminus Thr and Ser residues by protein phosphatase-1 (PP1) triggers CDK9 activity, contributing to the activation of HIV-1 transcription. N6-acetylation of Lys-44 promotes kinase activity, whereas acetylation of both Lys-44 and Lys-48 mediated by PCAF/KAT2B and GCN5/KAT2A reduces kinase activity. The acetylated form associates with PML bodies in the nuclear matrix and with the transcriptionally silent HIV-1 genome; deacetylated upon transcription stimulation. Deacetylated by SIRT7, promoting the kinase activity and subsequent 'Ser-2' phosphorylation of the C-terminal domain (CTD) of RNA polymerase II. Post-translationally, polyubiquitinated and thus activated by UBR5. This ubiquitination is promoted by TFIIS/TCEA1 and favors 'Ser-2' phosphorylation of RPB1/POLR2A CTD. As to expression, ubiquitous.

It is found in the nucleus. It localises to the cytoplasm. The protein localises to the PML body. It catalyses the reaction L-seryl-[protein] + ATP = O-phospho-L-seryl-[protein] + ADP + H(+). The catalysed reaction is L-threonyl-[protein] + ATP = O-phospho-L-threonyl-[protein] + ADP + H(+). The enzyme catalyses [DNA-directed RNA polymerase] + ATP = phospho-[DNA-directed RNA polymerase] + ADP + H(+). Inhibited by CDKI-71, CR8, GPC-286199, AG-024322, flavopiridol (alvocidib), RBG-286147, anilinopyrimidine 32, arylazopyrazole 31b, indirubin 3'-monoxime, meriolin 3,P276-00, olomoucine II, pyrazolotriazine, meriolin, variolin, thiazolyl-pyrimidine, thiazolyl-pyrimidine, indirubin-30-monoxime, ZK 304709, AG-012986, AT7519, R547, RGB-286638, imidazole pyrimidine, EXEL-3700, EXEL-8647, 5,6-dichloro-1-b-ribofur-anosyl-benzimidazole (DRB), P276-00, roscovitine (seliciclib, CYC202) and SNS-032 (BMS-387032). Activation by Thr-186 phosphorylation is calcium Ca(2+) signaling pathway-dependent; actively inactivated by dephosphorylation mediated by PPP1CA, PPM1A and PPM1B. Reversibly repressed by acetylation at Lys-44 and Lys-48. In terms of biological role, protein kinase involved in the regulation of transcription. Member of the cyclin-dependent kinase pair (CDK9/cyclin-T) complex, also called positive transcription elongation factor b (P-TEFb), which facilitates the transition from abortive to productive elongation by phosphorylating the CTD (C-terminal domain) of the large subunit of RNA polymerase II (RNAP II) POLR2A, SUPT5H and RDBP. This complex is inactive when in the 7SK snRNP complex form. Phosphorylates EP300, MYOD1, RPB1/POLR2A and AR and the negative elongation factors DSIF and NELFE. Regulates cytokine inducible transcription networks by facilitating promoter recognition of target transcription factors (e.g. TNF-inducible RELA/p65 activation and IL-6-inducible STAT3 signaling). Promotes RNA synthesis in genetic programs for cell growth, differentiation and viral pathogenesis. P-TEFb is also involved in cotranscriptional histone modification, mRNA processing and mRNA export. Modulates a complex network of chromatin modifications including histone H2B monoubiquitination (H2Bub1), H3 lysine 4 trimethylation (H3K4me3) and H3K36me3; integrates phosphorylation during transcription with chromatin modifications to control co-transcriptional histone mRNA processing. The CDK9/cyclin-K complex has also a kinase activity towards CTD of RNAP II and can substitute for CDK9/cyclin-T P-TEFb in vitro. Replication stress response protein; the CDK9/cyclin-K complex is required for genome integrity maintenance, by promoting cell cycle recovery from replication arrest and limiting single-stranded DNA amount in response to replication stress, thus reducing the breakdown of stalled replication forks and avoiding DNA damage. In addition, probable function in DNA repair of isoform 2 via interaction with KU70/XRCC6. Promotes cardiac myocyte enlargement. RPB1/POLR2A phosphorylation on 'Ser-2' in CTD activates transcription. AR phosphorylation modulates AR transcription factor promoter selectivity and cell growth. DSIF and NELF phosphorylation promotes transcription by inhibiting their negative effect. The phosphorylation of MYOD1 enhances its transcriptional activity and thus promotes muscle differentiation. Catalyzes phosphorylation of KAT5, promoting KAT5 recruitment to chromatin and histone acetyltransferase activity. This Homo sapiens (Human) protein is Cyclin-dependent kinase 9.